Reading from the N-terminus, the 583-residue chain is MANFIWDARILTGDGMEMFPADVKNFIAPPWPIEFWKEPVFTSNRANMERQLAIITARNNAATAALNNLDGHTDSIAIEIDRRLRPIEEKIEHIATALADLEHAAAAAELADAAMDIAVSAVEKSGQHKEDVNITSAREIQIVKNDPLLRYDSNLSVDLLNLVYANRNVVNSGVVFGTWYRTLQNALVADKPSVARKIDYHGGRMSRTFIVTAITSLQSCGRLYVGTRYYSSLECAILCLYAFYAKTGTNISHPTNFMSAIESVPTYLEHLSTRLASSDSRQKYGFDWARLPKDTFDSPCGKYERGALHDHSILRALVNSRVLPPGAGSLPRGDVIPEIDAEQGIRNDEVNRAAAALLGRAQPLFLMEDQPLLRSTIDTITALLLLHRLLWNTNIYSARVKNIFQLGAFVPGIVPDLTVGASVDTPGDIIKSDGRNLMFLFQRYVAPMYGTVKGIEFTQLFPGLVALCLDVPLFSGGIFSHRAPLSRVVDVSLGKYQASLVKLISLELENRSRANIVSVCEVITAHDLVTLQYEQGLESLMQIQRPRSRLFETKKLSAFNVETDYDLIYFICLGYIPKLISTL.

The segment at 1-49 (MANFIWDARILTGDGMEMFPADVKNFIAPPWPIEFWKEPVFTSNRANME) is interaction with major capsid protein/MCP.

It belongs to the herpesviridae CVC2 protein family. As to quaternary structure, heterodimerizes with CVC1. Interacts with major capsid protein/MCP and triplex capsid protein 1/TRX1 at the pentamer vertices. Interacts with the large tegument protein/LTP.

It localises to the virion. It is found in the host nucleus. Functionally, capsid vertex-specific component that plays a role during viral DNA encapsidation, assuring correct genome cleavage and presumably stabilizing capsids that contain full-length viral genomes. Participates in the interaction between the capsid and the tegument through interaction with the large tegument protein/LTP. This Gallus gallus (Chicken) protein is Capsid vertex component 2.